A 366-amino-acid polypeptide reads, in one-letter code: Beta sliding clamp (366 aa).

It belongs to the beta sliding clamp family. As to quaternary structure, forms a ring-shaped head-to-tail homodimer around DNA which binds and tethers DNA polymerases and other proteins to the DNA. The DNA replisome complex has a single clamp-loading complex (3 tau and 1 each of delta, delta', psi and chi subunits) which binds 3 Pol III cores (1 core on the leading strand and 2 on the lagging strand) each with a beta sliding clamp dimer. Additional proteins in the replisome are other copies of gamma, psi and chi, Ssb, DNA helicase and RNA primase.

It is found in the cytoplasm. Confers DNA tethering and processivity to DNA polymerases and other proteins. Acts as a clamp, forming a ring around DNA (a reaction catalyzed by the clamp-loading complex) which diffuses in an ATP-independent manner freely and bidirectionally along dsDNA. Initially characterized for its ability to contact the catalytic subunit of DNA polymerase III (Pol III), a complex, multichain enzyme responsible for most of the replicative synthesis in bacteria; Pol III exhibits 3'-5' exonuclease proofreading activity. The beta chain is required for initiation of replication as well as for processivity of DNA replication. This chain is Beta sliding clamp (dnaN), found in Chlamydia pneumoniae (Chlamydophila pneumoniae).